The chain runs to 359 residues: Peptide chain release factor 1 (359 aa).

At Gln234 the chain carries N5-methylglutamine.

The protein belongs to the prokaryotic/mitochondrial release factor family. Methylated by PrmC. Methylation increases the termination efficiency of RF1.

Its subcellular location is the cytoplasm. Its function is as follows. Peptide chain release factor 1 directs the termination of translation in response to the peptide chain termination codons UAG and UAA. In Clavibacter michiganensis subsp. michiganensis (strain NCPPB 382), this protein is Peptide chain release factor 1.